A 327-amino-acid chain; its full sequence is Phenylalanine--tRNA ligase alpha subunit (327 aa).

E252 is a binding site for Mg(2+).

It belongs to the class-II aminoacyl-tRNA synthetase family. Phe-tRNA synthetase alpha subunit type 1 subfamily. Tetramer of two alpha and two beta subunits. The cofactor is Mg(2+).

It localises to the cytoplasm. It catalyses the reaction tRNA(Phe) + L-phenylalanine + ATP = L-phenylalanyl-tRNA(Phe) + AMP + diphosphate + H(+). The protein is Phenylalanine--tRNA ligase alpha subunit of Shewanella denitrificans (strain OS217 / ATCC BAA-1090 / DSM 15013).